The following is a 347-amino-acid chain: Haptoglobin (347 aa).

A signal peptide spans 1-18 (MRALGAVITLLLWGQLFA). A Sushi domain is found at 31 to 88 (DSCPKPPEIANGYVEHLVRYQCKNYYRLRTEGDGVYALNSEKQWVNKAVGEQLPECEA). Cystine bridges form between Cys-52-Cys-86 and Cys-90-Cys-207. A Peptidase S1 domain is found at 103–345 (IIGGSLDAKG…ILDWIQKTIA (243 aa)). N-linked (GlcNAc...) asparagine glycans are attached at residues Asn-148, Asn-152, Asn-182, Asn-230, and Asn-256. Disulfide bonds link Cys-250/Cys-281 and Cys-292/Cys-322. Positions 259-264 (VPENKI) are interaction with CD163.

It belongs to the peptidase S1 family. Tetramer of two alpha and two beta chains; disulfide-linked. The hemoglobin/haptoglobin complex is composed of a haptoglobin dimer bound to two hemoglobin alpha-beta dimers. Interacts with CD163. Interacts with ERGIC3. In terms of tissue distribution, expressed by the liver and secreted in plasma.

The protein resides in the secreted. Its function is as follows. As a result of hemolysis, hemoglobin is found to accumulate in the kidney and is secreted in the urine. Haptoglobin captures, and combines with free plasma hemoglobin to allow hepatic recycling of heme iron and to prevent kidney damage. Haptoglobin also acts as an antioxidant, has antibacterial activity and plays a role in modulating many aspects of the acute phase response. Hemoglobin/haptoglobin complexes are rapidly cleared by the macrophage CD163 scavenger receptor expressed on the surface of liver Kupfer cells through an endocytic lysosomal degradation pathway. The sequence is that of Haptoglobin (HP) from Oryctolagus cuniculus (Rabbit).